We begin with the raw amino-acid sequence, 156 residues long: MGKKVVDITAELVKPILEQLDLELYDVEFKKEGKDWFLRVFIDSETGVDLEDCGKVSERLSEKLDETDPIEQAYFLEVSSPGAERPLKREKDLLRSIGKNVHVTLYEPIDGEKALEGELTEFDGETLTIEIKIKTRKKTVTIPYAKVASARLAVVF.

This sequence belongs to the RimP family.

It localises to the cytoplasm. In terms of biological role, required for maturation of 30S ribosomal subunits. In Halalkalibacterium halodurans (strain ATCC BAA-125 / DSM 18197 / FERM 7344 / JCM 9153 / C-125) (Bacillus halodurans), this protein is Ribosome maturation factor RimP.